A 658-amino-acid polypeptide reads, in one-letter code: Alkyldihydroxyacetonephosphate synthase, peroxisomal (658 aa).

The segment covering 1–24 has biased composition (low complexity); that stretch reads MAEAAAAAAAAAAAGETSASSGSA. A disordered region spans residues 1 to 37; it reads MAEAAAAAAAAAAAGETSASSGSAAERDPDQDRAGRR. The N-terminal 58 residues, 1–58, are a transit peptide targeting the peroxisome; sequence MAEAAAAAAAAAAAGETSASSGSAAERDPDQDRAGRRLRVLSGHLLGRPQEALSTNEC. A compositionally biased stretch (basic and acidic residues) spans 25 to 35; the sequence is AERDPDQDRAG. The residue at position 65 (Ser-65) is a Phosphoserine. Thr-74 is subject to Phosphothreonine. Lys-102 carries the post-translational modification N6-acetyllysine. The FAD-binding PCMH-type domain maps to 202–384; that stretch reads FERIPDIVLW…TEATIKIRPT (183 aa). FAD-binding positions include 234 to 240, 303 to 309, and 316 to 319; these read PIGGGTS, DSLEFST, and TRAS. An N6-acetyllysine modification is found at Lys-347. 368–374 provides a ligand contact to FAD; sequence EGTLGVI. Position 515 (Arg-515) interacts with substrate. Tyr-578 serves as the catalytic Proton donor/acceptor. Important for enzyme activity regions lie at residues 615–617 and 654–658; these read HHH and NRNLL.

Belongs to the FAD-binding oxidoreductase/transferase type 4 family. As to quaternary structure, homodimer. It depends on FAD as a cofactor.

The protein resides in the peroxisome membrane. It localises to the peroxisome. It carries out the reaction a long chain fatty alcohol + a 1-acylglycerone 3-phosphate = a 1-O-alkylglycerone 3-phosphate + a long-chain fatty acid + H(+). The enzyme catalyses hexadecan-1-ol + 1-hexadecanoylglycerone 3-phosphate = 1-O-hexadecylglycerone 3-phosphate + hexadecanoate + H(+). The catalysed reaction is 1-hexadecanoylglycerone 3-phosphate + a long-chain fatty acid = a 1-acylglycerone 3-phosphate + hexadecanoate. Its pathway is glycerolipid metabolism; ether lipid biosynthesis. With respect to regulation, inhibited by N-ethylmaleimide, p-bromophenacylbromide, 2,4- dinitrofluorobenzene and divalent cations such as such as Mn(2+), Mg(2+) and Zn(2+). Inhibition by p-bromophenacylbromide is strongly pH dependent and is highest at alkaline conditions. Its function is as follows. Catalyzes the exchange of the acyl chain in acyl-dihydroxyacetonephosphate (acyl-DHAP) for a long chain fatty alcohol, yielding the first ether linked intermediate, i.e. alkyl-dihydroxyacetonephosphate (alkyl-DHAP), in the pathway of ether lipid biosynthesis. The chain is Alkyldihydroxyacetonephosphate synthase, peroxisomal (AGPS) from Cavia porcellus (Guinea pig).